The chain runs to 288 residues: GTP-binding protein 8 (288 aa).

The EngB-type G domain occupies 109–282; sequence HRPEVCFIGR…RCFIADITGN (174 aa). Residues 117-124, 146-150, 164-167, 226-229, and 261-263 each bind GTP; these read GRSNVGKS, GHTKK, DMPG, TKID, and VSA. Mg(2+)-binding residues include Ser-124 and Thr-148.

The protein belongs to the TRAFAC class TrmE-Era-EngA-EngB-Septin-like GTPase superfamily. EngB GTPase family. Requires Mg(2+) as cofactor.

The chain is GTP-binding protein 8 (GTPBP8) from Bos taurus (Bovine).